A 1150-amino-acid polypeptide reads, in one-letter code: uncharacterized protein (1150 aa).

This sequence belongs to the TMEM1 family.

This is an uncharacterized protein from Schizosaccharomyces pombe (strain 972 / ATCC 24843) (Fission yeast).